A 153-amino-acid polypeptide reads, in one-letter code: Bkd operon transcriptional regulator (153 aa).

The 62-residue stretch at 4–65 folds into the HTH asnC-type domain; sequence LDRIDLKILR…RLDEERLSGA (62 aa). Positions 23–42 form a DNA-binding region, H-T-H motif; that stretch reads WRDLAQKVGLSLTPTLRRVR.

Functionally, positive regulator of the bkd operon for branched-chain keto acid dehydrogenase complex. The protein is Bkd operon transcriptional regulator (bkdR) of Pseudomonas aeruginosa (strain ATCC 15692 / DSM 22644 / CIP 104116 / JCM 14847 / LMG 12228 / 1C / PRS 101 / PAO1).